The sequence spans 385 residues: Aldehyde dehydrogenase family 3 member B2 (385 aa).

Residue 107 to 112 participates in NAD(+) binding; the sequence is GSPRVG. Active-site residues include Glu-129 and Cys-163. Cys-382 bears the Cysteine methyl ester mark. A lipid anchor (S-geranylgeranyl cysteine) is attached at Cys-382. Residues 383–385 constitute a propeptide, removed in mature form; the sequence is TLL.

It belongs to the aldehyde dehydrogenase family. In terms of processing, geranylgeranylation is important for localization to lipid droplets and enzyme activity. In terms of tissue distribution, salivary gland. Expressed at protein level in placenta.

It localises to the lipid droplet. The catalysed reaction is an aldehyde + NAD(+) + H2O = a carboxylate + NADH + 2 H(+). It carries out the reaction a long-chain fatty aldehyde + NAD(+) + H2O = a long-chain fatty acid + NADH + 2 H(+). The enzyme catalyses a medium-chain fatty aldehyde + NAD(+) + H2O = a medium-chain fatty acid + NADH + 2 H(+). It catalyses the reaction hexadecanoate + NADH + 2 H(+) = hexadecanal + NAD(+) + H2O. The catalysed reaction is octanal + NAD(+) + H2O = octanoate + NADH + 2 H(+). It participates in alcohol metabolism; ethanol degradation; acetate from ethanol: step 2/2. Functionally, oxidizes medium and long chain fatty aldehydes in lipid droplets into non-toxic fatty acids. The chain is Aldehyde dehydrogenase family 3 member B2 (ALDH3B2) from Homo sapiens (Human).